The sequence spans 196 residues: Probable malonic semialdehyde reductase RutE (196 aa).

It belongs to the nitroreductase family. HadB/RutE subfamily. FMN is required as a cofactor.

The catalysed reaction is 3-hydroxypropanoate + NADP(+) = 3-oxopropanoate + NADPH + H(+). In terms of biological role, may reduce toxic product malonic semialdehyde to 3-hydroxypropionic acid, which is excreted. In Shigella dysenteriae serotype 1 (strain Sd197), this protein is Probable malonic semialdehyde reductase RutE.